The sequence spans 300 residues: Ribosomal protein bS6--L-glutamate ligase (300 aa).

The ATP-grasp domain occupies 104–287 (MQLLARQGID…IAGKMIRWIE (184 aa)). ATP-binding positions include lysine 141, 178 to 179 (EY), aspartate 187, and 211 to 213 (RSN). Positions 248, 260, and 262 each coordinate Mg(2+). Aspartate 248, glutamate 260, and asparagine 262 together coordinate Mn(2+).

Belongs to the RimK family. Requires Mg(2+) as cofactor. The cofactor is Mn(2+).

Functionally, an L-glutamate ligase that catalyzes the ATP-dependent post-translational addition of glutamate residues to the C-terminus of ribosomal protein bS6 (RpsF). Is also able to catalyze the synthesis of poly-alpha-glutamate in vitro, via ATP hydrolysis from unprotected glutamate as substrate. The number of glutamate residues added to either RpsF or to poly-alpha-glutamate changes with pH. The protein is Ribosomal protein bS6--L-glutamate ligase of Shigella boydii serotype 4 (strain Sb227).